We begin with the raw amino-acid sequence, 591 residues long: Probable sulfoacetaldehyde acetyltransferase (591 aa).

The segment at 359–383 (MDHEDDDPGTEWNVGARQREPDRMS) is disordered.

Belongs to the TPP enzyme family. Requires Mg(2+) as cofactor. It depends on thiamine diphosphate as a cofactor.

It is found in the cytoplasm. The enzyme catalyses acetyl phosphate + sulfite + H(+) = sulfoacetaldehyde + phosphate. Its pathway is organosulfur degradation; taurine degradation via aerobic pathway; acetyl phosphate and sulfite from taurine: step 2/2. This Rhizobium meliloti (strain 1021) (Ensifer meliloti) protein is Probable sulfoacetaldehyde acetyltransferase (xsc).